We begin with the raw amino-acid sequence, 247 residues long: Vacuolar iron transporter 1 (247 aa).

Residues 1-33 lie on the Cytoplasmic side of the membrane; it reads MVIAGVSPPTPSSENLLQEHEEKHFTATDVVRD. Residues 34 to 54 traverse the membrane as a helical segment; that stretch reads VIIGVSDGLTVPFALAAGLSG. Residues 55–60 lie on the Vacuolar side of the membrane; it reads ANVPSS. The helical transmembrane segment at 61–81 threads the bilayer; the sequence is LILTAGIAEVAAGAISMGLGG. Topologically, residues 82 to 167 are cytoplasmic; it reads YLAAKSEEDH…PRRALESAMT (86 aa). Fe cation is bound by residues glutamate 99, glutamate 102, glutamate 110, glutamate 113, methionine 146, and glutamate 150. Residues 168–188 traverse the membrane as a helical segment; it reads IALAYVVGGLVPLSPYFFIPF. Residues 189–191 are Vacuolar-facing; the sequence is AKQ. Residues 192 to 212 form a helical membrane-spanning segment; it reads AMITSIAVTLLALVVFGYIKG. The Cytoplasmic portion of the chain corresponds to 213–219; the sequence is RFTGSNP. The helical transmembrane segment at 220 to 240 threads the bilayer; that stretch reads VLSSIQTAIIGALASAAAYAM. Residues 241 to 247 lie on the Vacuolar side of the membrane; sequence AKAVQSV.

This sequence belongs to the CCC1 family. In terms of tissue distribution, expressed at high levels in the blue epidermal cells of the inner bottom part of the petal (at protein level). No detectable expression in parenchyma and epidermis of the purple segments of the petal, parenchyma of the blue segments, leaf, stem, bulb and root (at protein level). High levels of mRNA in the blue epidermal cells of the inner bottom part of the petal. Low-levels of mRNA in the purple segments of the petal, stem, leaf, root, bulb and pistil.

The protein localises to the vacuole membrane. The catalysed reaction is Fe(2+)(in) = Fe(2+)(out). Its function is as follows. Vacuolar iron transporter involved in the transfer of iron ions from the cytosol to the vacuole for intracellular iron storage. Plays an essential role in the development of blue coloration in tulip petals most likely due to the accumulation of ferrous ions that can form complexes with anthocyanins. This chain is Vacuolar iron transporter 1, found in Tulipa gesneriana (Garden tulip).